The chain runs to 122 residues: Structural protein p14.5 (122 aa).

2 disordered regions span residues 1 to 27 and 73 to 122; these read MADF…LEYD and EDNN…HKSK. Ala-2 bears the N-acetylalanine; by host mark. The span at 105–122 shows a compositional bias: basic residues; sequence KPKKKKHLFPKLSSHKSK.

Belongs to the asfivirus structural protein p14.5 family. Interacts with the major capsid protein. Interacts with host IRF3; this interaction interferes with the recruitment of IRF3 to TBK1. Post-translationally, acetylated.

It is found in the virion. Its function is as follows. Structural protein required for transport of intracellular particles from the assembly sites to the plasma membrane. Binds to both ssDNA and dsDNA. Suppressed the activation of the cGAS/STING pathway by interfering with the recruitment of IRF3 to TBK1, which in turn suppresses IRF3 phosphorylation, decreasing interferon production. This chain is Structural protein p14.5, found in African swine fever virus (isolate Warthog/Namibia/Wart80/1980) (ASFV).